The primary structure comprises 102 residues: Small ribosomal subunit protein uS10 (102 aa).

The protein belongs to the universal ribosomal protein uS10 family. Part of the 30S ribosomal subunit.

Its function is as follows. Involved in the binding of tRNA to the ribosomes. This chain is Small ribosomal subunit protein uS10, found in Methanococcus maripaludis (strain C7 / ATCC BAA-1331).